The sequence spans 444 residues: Exodeoxyribonuclease 7 large subunit (444 aa).

Belongs to the XseA family. As to quaternary structure, heterooligomer composed of large and small subunits.

Its subcellular location is the cytoplasm. The enzyme catalyses Exonucleolytic cleavage in either 5'- to 3'- or 3'- to 5'-direction to yield nucleoside 5'-phosphates.. Bidirectionally degrades single-stranded DNA into large acid-insoluble oligonucleotides, which are then degraded further into small acid-soluble oligonucleotides. The polypeptide is Exodeoxyribonuclease 7 large subunit (Rickettsia canadensis (strain McKiel)).